A 141-amino-acid chain; its full sequence is Hemoglobin subunit alpha (141 aa).

Residues 1–141 form the Globin domain; sequence VLSGTDKSNI…VSTVLTSKYR (141 aa). At S3 the chain carries Phosphoserine. 2 positions are modified to N6-succinyllysine: K7 and K11. N6-acetyllysine; alternate is present on K16. K16 is subject to N6-succinyllysine; alternate. At Y24 the chain carries Phosphotyrosine. S35 is subject to Phosphoserine. K40 is modified (N6-succinyllysine). Residue S49 is modified to Phosphoserine. Residue H58 participates in O2 binding. Residue H87 participates in heme b binding. S102 is subject to Phosphoserine. A Phosphothreonine modification is found at T108. S124 bears the Phosphoserine mark. 2 positions are modified to phosphothreonine: T134 and T137. S138 bears the Phosphoserine mark.

This sequence belongs to the globin family. In terms of assembly, heterotetramer of two alpha chains and two beta chains. As to expression, red blood cells.

Involved in oxygen transport from the lung to the various peripheral tissues. Functionally, hemopressin acts as an antagonist peptide of the cannabinoid receptor CNR1. Hemopressin-binding efficiently blocks cannabinoid receptor CNR1 and subsequent signaling. The polypeptide is Hemoglobin subunit alpha (HBA) (Talpa europaea (European mole)).